The following is a 141-amino-acid chain: Endoribonuclease YbeY (141 aa).

Zn(2+) contacts are provided by His-105, His-109, and Asp-115.

This sequence belongs to the endoribonuclease YbeY family. The cofactor is Zn(2+).

It localises to the cytoplasm. In terms of biological role, single strand-specific metallo-endoribonuclease involved in late-stage 70S ribosome quality control and in maturation of the 3' terminus of the 16S rRNA. The polypeptide is Endoribonuclease YbeY (Chlorobaculum parvum (strain DSM 263 / NCIMB 8327) (Chlorobium vibrioforme subsp. thiosulfatophilum)).